A 271-amino-acid polypeptide reads, in one-letter code: HTH-type transcriptional repressor AllR (271 aa).

Residues 21-83 enclose the HTH iclR-type domain; sequence AQALERGIAI…SQLGWWHIGL (63 aa). A DNA-binding region (H-T-H motif) is located at residues 43-62; sequence VSDISLNLDLPLSTTFRLLK. In terms of domain architecture, IclR-ED spans 98 to 267; the sequence is VLSVAGPFMR…ARDISTALGL (170 aa). Residues 154–156, Asp-207, Cys-217, and 234–236 each bind glyoxylate; these read SGA and SIS.

Negative regulator of allantoin and glyoxylate utilization operons. Binds to the gcl promoter and to the allS-allA intergenic region. The protein is HTH-type transcriptional repressor AllR (allR) of Escherichia coli O6:H1 (strain CFT073 / ATCC 700928 / UPEC).